The sequence spans 262 residues: tRNA pseudouridine synthase A (262 aa).

The active-site Nucleophile is Asp52. A substrate-binding site is contributed by Tyr103.

It belongs to the tRNA pseudouridine synthase TruA family.

The catalysed reaction is uridine(38/39/40) in tRNA = pseudouridine(38/39/40) in tRNA. Formation of pseudouridine at positions 38, 39 and 40 in the anticodon stem and loop of transfer RNAs. This chain is tRNA pseudouridine synthase A, found in Methanococcus maripaludis (strain DSM 14266 / JCM 13030 / NBRC 101832 / S2 / LL).